Reading from the N-terminus, the 185-residue chain is HTH-type transcriptional regulator SA2364 (185 aa).

One can recognise an HTH tetR-type domain in the interval 6-66 (KENRQRIEEI…YVIQRDLDIF (61 aa)). A DNA-binding region (H-T-H motif) is located at residues 29–48 (SMNRIAKELGIGMGTLYRHF).

In Staphylococcus aureus (strain N315), this protein is HTH-type transcriptional regulator SA2364.